The primary structure comprises 434 residues: Serine--tRNA ligase (434 aa).

Residue 239–241 coordinates L-serine; the sequence is TAE. 270–272 contacts ATP; that stretch reads RSE. Residue Glu293 participates in L-serine binding. Residue 357–360 coordinates ATP; the sequence is EISS. Residue Ser392 coordinates L-serine.

It belongs to the class-II aminoacyl-tRNA synthetase family. Type-1 seryl-tRNA synthetase subfamily. As to quaternary structure, homodimer. The tRNA molecule binds across the dimer.

The protein resides in the cytoplasm. The enzyme catalyses tRNA(Ser) + L-serine + ATP = L-seryl-tRNA(Ser) + AMP + diphosphate + H(+). It catalyses the reaction tRNA(Sec) + L-serine + ATP = L-seryl-tRNA(Sec) + AMP + diphosphate + H(+). It functions in the pathway aminoacyl-tRNA biosynthesis; selenocysteinyl-tRNA(Sec) biosynthesis; L-seryl-tRNA(Sec) from L-serine and tRNA(Sec): step 1/1. In terms of biological role, catalyzes the attachment of serine to tRNA(Ser). Is also able to aminoacylate tRNA(Sec) with serine, to form the misacylated tRNA L-seryl-tRNA(Sec), which will be further converted into selenocysteinyl-tRNA(Sec). The chain is Serine--tRNA ligase from Cupriavidus necator (strain ATCC 17699 / DSM 428 / KCTC 22496 / NCIMB 10442 / H16 / Stanier 337) (Ralstonia eutropha).